The following is a 396-amino-acid chain: Cysteine protease ATG4A (396 aa).

Residue Cys77 is the Nucleophile of the active site. Active-site residues include Asp276 and His278. The LIR signature appears at 390–393 (FEIL).

This sequence belongs to the peptidase C54 family. As to quaternary structure, interacts with ATG9A; the interaction is direct.

Its subcellular location is the cytoplasm. The enzyme catalyses [protein]-C-terminal L-amino acid-glycyl-phosphatidylethanolamide + H2O = [protein]-C-terminal L-amino acid-glycine + a 1,2-diacyl-sn-glycero-3-phosphoethanolamine. Its activity is regulated as follows. Inhibited by N-ethylmaleimide. Redox-regulated during autophagy since reducing conditions activate ATG4A whereas an oxidizing environment such as the presence of H(2)O(2) inhibits its activity. Cysteine protease that plays a key role in autophagy by mediating both proteolytic activation and delipidation of ATG8 family proteins. The protease activity is required for proteolytic activation of ATG8 family proteins: cleaves the C-terminal amino acid of ATG8 proteins to reveal a C-terminal glycine. Exposure of the glycine at the C-terminus is essential for ATG8 proteins conjugation to phosphatidylethanolamine (PE) and insertion to membranes, which is necessary for autophagy. Preferred substrate is GABARAPL2 followed by MAP1LC3A and GABARAP. Protease activity is also required to counteract formation of high-molecular weight conjugates of ATG8 proteins (ATG8ylation): acts as a deubiquitinating-like enzyme that removes ATG8 conjugated to other proteins, such as ATG3. In addition to the protease activity, also mediates delipidation of ATG8 family proteins. Catalyzes delipidation of PE-conjugated forms of ATG8 proteins during macroautophagy. Compared to ATG4B, the major protein for proteolytic activation of ATG8 proteins, shows weaker ability to cleave the C-terminal amino acid of ATG8 proteins, while it displays stronger delipidation activity. Involved in phagophore growth during mitophagy independently of its protease activity and of ATG8 proteins: acts by regulating ATG9A trafficking to mitochondria and promoting phagophore-endoplasmic reticulum contacts during the lipid transfer phase of mitophagy. This chain is Cysteine protease ATG4A, found in Mus musculus (Mouse).